The primary structure comprises 187 residues: ATP synthase subunit b (187 aa).

A helical membrane pass occupies residues 36-53 (PYQWVSVAMLVLIAIMLW).

This sequence belongs to the ATPase B chain family. In terms of assembly, F-type ATPases have 2 components, F(1) - the catalytic core - and F(0) - the membrane proton channel. F(1) has five subunits: alpha(3), beta(3), gamma(1), delta(1), epsilon(1). F(0) has four main subunits: a(1), b(2) and c(10-14). The alpha and beta chains form an alternating ring which encloses part of the gamma chain. F(1) is attached to F(0) by a central stalk formed by the gamma and epsilon chains, while a peripheral stalk is formed by the delta and b chains.

The protein localises to the cell inner membrane. In terms of biological role, f(1)F(0) ATP synthase produces ATP from ADP in the presence of a proton or sodium gradient. F-type ATPases consist of two structural domains, F(1) containing the extramembraneous catalytic core and F(0) containing the membrane proton channel, linked together by a central stalk and a peripheral stalk. During catalysis, ATP synthesis in the catalytic domain of F(1) is coupled via a rotary mechanism of the central stalk subunits to proton translocation. Component of the F(0) channel, it forms part of the peripheral stalk, linking F(1) to F(0). The polypeptide is ATP synthase subunit b (Erythrobacter litoralis (strain HTCC2594)).